Reading from the N-terminus, the 904-residue chain is DNA mismatch repair protein MutS (904 aa).

638 to 645 (GPNMAGKS) lines the ATP pocket. The interval 825–869 (KSKADGTRRPASYHEAQPLLPGMPEPPSTASAEPPQTVTPPEPPV) is disordered.

The protein belongs to the DNA mismatch repair MutS family.

This protein is involved in the repair of mismatches in DNA. It is possible that it carries out the mismatch recognition step. This protein has a weak ATPase activity. The polypeptide is DNA mismatch repair protein MutS (Oleidesulfovibrio alaskensis (strain ATCC BAA-1058 / DSM 17464 / G20) (Desulfovibrio alaskensis)).